A 341-amino-acid polypeptide reads, in one-letter code: tRNA N6-adenosine threonylcarbamoyltransferase (341 aa).

Histidine 119 and histidine 123 together coordinate Fe cation. Substrate contacts are provided by residues 141-145 (MVSGG), aspartate 174, glycine 187, and asparagine 279. Aspartate 307 is a binding site for Fe cation.

Belongs to the KAE1 / TsaD family. Requires Fe(2+) as cofactor.

It is found in the cytoplasm. It carries out the reaction L-threonylcarbamoyladenylate + adenosine(37) in tRNA = N(6)-L-threonylcarbamoyladenosine(37) in tRNA + AMP + H(+). Functionally, required for the formation of a threonylcarbamoyl group on adenosine at position 37 (t(6)A37) in tRNAs that read codons beginning with adenine. Is involved in the transfer of the threonylcarbamoyl moiety of threonylcarbamoyl-AMP (TC-AMP) to the N6 group of A37, together with TsaE and TsaB. TsaD likely plays a direct catalytic role in this reaction. In Oenococcus oeni (strain ATCC BAA-331 / PSU-1), this protein is tRNA N6-adenosine threonylcarbamoyltransferase.